The chain runs to 215 residues: Thiopurine S-methyltransferase (215 aa).

S-adenosyl-L-methionine contacts are provided by tryptophan 10, leucine 45, glutamate 66, and arginine 123.

The protein belongs to the class I-like SAM-binding methyltransferase superfamily. TPMT family.

The protein localises to the cytoplasm. It catalyses the reaction S-adenosyl-L-methionine + a thiopurine = S-adenosyl-L-homocysteine + a thiopurine S-methylether.. The protein is Thiopurine S-methyltransferase of Pseudomonas putida (strain W619).